Reading from the N-terminus, the 257-residue chain is Probable enoyl-CoA hydratase (257 aa).

The protein belongs to the enoyl-CoA hydratase/isomerase family.

It carries out the reaction a (3S)-3-hydroxyacyl-CoA = a (2E)-enoyl-CoA + H2O. The catalysed reaction is a 4-saturated-(3S)-3-hydroxyacyl-CoA = a (3E)-enoyl-CoA + H2O. Its function is as follows. Could possibly oxidize fatty acids using specific components. This Rhizobium meliloti (strain 1021) (Ensifer meliloti) protein is Probable enoyl-CoA hydratase (fadB1).